We begin with the raw amino-acid sequence, 152 residues long: Protein eva-1 homolog A (152 aa).

The necessary for the localization and biological activity stretch occupies residues 1–60 (MRLPLSHSPEHVEMALLSNILAAYSFVSENPERAALYFVSGVCIGLVLTLAALVIRISCH). Residues 35–55 (ALYFVSGVCIGLVLTLAALVI) traverse the membrane as a helical segment. A disordered region spans residues 70–97 (KFLQDRESSSDSSDSEDGSEDTVSDLSV). Residues 82–92 (SDSEDGSEDTV) show a composition bias toward acidic residues. The residue at position 106 (Thr-106) is a Phosphothreonine. At Ser-114 the chain carries Phosphoserine; by FAM20C.

This sequence belongs to the EVA1 family. Expressed in lung, kidney, liver, pancreas, placenta, but not in heart and skeletal muscle.

Its subcellular location is the endoplasmic reticulum membrane. It is found in the lysosome membrane. In terms of biological role, acts as a regulator of programmed cell death, mediating both autophagy and apoptosis. The protein is Protein eva-1 homolog A (EVA1A) of Homo sapiens (Human).